A 1057-amino-acid chain; its full sequence is Carbamoyl phosphate synthase large chain (1057 aa).

The tract at residues 1–401 (MPKRNDIKTI…SLLKAIRSLE (401 aa)) is carboxyphosphate synthetic domain. Arg129, Arg169, Gly175, Gly176, Lys208, Ile210, Glu215, Gly241, Ile242, His243, Gln284, and Glu298 together coordinate ATP. The ATP-grasp 1 domain occupies 133–327 (RTLMNDLNVP…IAKLAAKIAV (195 aa)). Mg(2+)-binding residues include Gln284, Glu298, and Asn300. The Mn(2+) site is built by Gln284, Glu298, and Asn300. Residues 402–546 (YGVHHLGLPN…YGTYETENES (145 aa)) are oligomerization domain. The tract at residues 547-929 (IVTDKEKILV…ALFKGLTGSG (383 aa)) is carbamoyl phosphate synthetic domain. One can recognise an ATP-grasp 2 domain in the interval 671–861 (EALLRKINVP…MAQLAMRAII (191 aa)). Residues Arg707, Arg746, Leu748, Glu752, Gly777, Val778, His779, Ser780, Gln820, and Glu832 each coordinate ATP. Mg(2+)-binding residues include Gln820, Glu832, and Asn834. Residues Gln820, Glu832, and Asn834 each coordinate Mn(2+). One can recognise an MGS-like domain in the interval 930 to 1057 (VEVKDHGTVL…ESMTFTMRQM (128 aa)). The tract at residues 930–1057 (VEVKDHGTVL…ESMTFTMRQM (128 aa)) is allosteric domain.

Belongs to the CarB family. As to quaternary structure, composed of two chains; the small (or glutamine) chain promotes the hydrolysis of glutamine to ammonia, which is used by the large (or ammonia) chain to synthesize carbamoyl phosphate. Tetramer of heterodimers (alpha,beta)4. Mg(2+) serves as cofactor. Mn(2+) is required as a cofactor.

The enzyme catalyses hydrogencarbonate + L-glutamine + 2 ATP + H2O = carbamoyl phosphate + L-glutamate + 2 ADP + phosphate + 2 H(+). The catalysed reaction is hydrogencarbonate + NH4(+) + 2 ATP = carbamoyl phosphate + 2 ADP + phosphate + 2 H(+). It functions in the pathway amino-acid biosynthesis; L-arginine biosynthesis; carbamoyl phosphate from bicarbonate: step 1/1. The protein operates within pyrimidine metabolism; UMP biosynthesis via de novo pathway; (S)-dihydroorotate from bicarbonate: step 1/3. In terms of biological role, large subunit of the glutamine-dependent carbamoyl phosphate synthetase (CPSase). CPSase catalyzes the formation of carbamoyl phosphate from the ammonia moiety of glutamine, carbonate, and phosphate donated by ATP, constituting the first step of 2 biosynthetic pathways, one leading to arginine and/or urea and the other to pyrimidine nucleotides. The large subunit (synthetase) binds the substrates ammonia (free or transferred from glutamine from the small subunit), hydrogencarbonate and ATP and carries out an ATP-coupled ligase reaction, activating hydrogencarbonate by forming carboxy phosphate which reacts with ammonia to form carbamoyl phosphate. The sequence is that of Carbamoyl phosphate synthase large chain from Staphylococcus aureus (strain USA300 / TCH1516).